A 427-amino-acid polypeptide reads, in one-letter code: C4-dicarboxylate transport protein (427 aa).

The next 9 membrane-spanning stretches (helical) occupy residues 5 to 25, 44 to 64, 76 to 96, 142 to 162, 184 to 206, 222 to 242, 307 to 327, 330 to 350, and 352 to 372; these read IFSS…FLGH, LIKM…IAGM, IALL…LCVV, IGAF…LFGF, VIFG…AMAF, LIAC…GSIA, IYLT…LDLF, ITLL…TGSG, and IVLA…LALI.

This sequence belongs to the dicarboxylate/amino acid:cation symporter (DAACS) (TC 2.A.23) family.

Its subcellular location is the cell inner membrane. Responsible for the transport of dicarboxylates such as succinate, fumarate, and malate from the periplasm across the membrane. The chain is C4-dicarboxylate transport protein from Aeromonas salmonicida (strain A449).